The chain runs to 180 residues: UPF0227 protein Ent638_1623 (180 aa).

The protein belongs to the UPF0227 family.

The sequence is that of UPF0227 protein Ent638_1623 from Enterobacter sp. (strain 638).